Reading from the N-terminus, the 231-residue chain is Biosynthetic peptidoglycan transglycosylase (231 aa).

The chain crosses the membrane as a helical span at residues 12–32 (LLAAFALLLLWQVWLFAQVAW).

Belongs to the glycosyltransferase 51 family.

Its subcellular location is the cell inner membrane. It carries out the reaction [GlcNAc-(1-&gt;4)-Mur2Ac(oyl-L-Ala-gamma-D-Glu-L-Lys-D-Ala-D-Ala)](n)-di-trans,octa-cis-undecaprenyl diphosphate + beta-D-GlcNAc-(1-&gt;4)-Mur2Ac(oyl-L-Ala-gamma-D-Glu-L-Lys-D-Ala-D-Ala)-di-trans,octa-cis-undecaprenyl diphosphate = [GlcNAc-(1-&gt;4)-Mur2Ac(oyl-L-Ala-gamma-D-Glu-L-Lys-D-Ala-D-Ala)](n+1)-di-trans,octa-cis-undecaprenyl diphosphate + di-trans,octa-cis-undecaprenyl diphosphate + H(+). It functions in the pathway cell wall biogenesis; peptidoglycan biosynthesis. Its function is as follows. Peptidoglycan polymerase that catalyzes glycan chain elongation from lipid-linked precursors. This Azoarcus sp. (strain BH72) protein is Biosynthetic peptidoglycan transglycosylase.